The following is a 405-amino-acid chain: Cysteine desulfurase IscS (405 aa).

Residues 75 to 76, asparagine 156, glutamine 184, and 204 to 206 each bind pyridoxal 5'-phosphate; these read AT and SAH. Lysine 207 bears the N6-(pyridoxal phosphate)lysine mark. Threonine 244 is a binding site for pyridoxal 5'-phosphate. Catalysis depends on cysteine 329, which acts as the Cysteine persulfide intermediate. Position 329 (cysteine 329) interacts with [2Fe-2S] cluster.

The protein belongs to the class-V pyridoxal-phosphate-dependent aminotransferase family. NifS/IscS subfamily. Homodimer. Forms a heterotetramer with IscU, interacts with other sulfur acceptors. It depends on pyridoxal 5'-phosphate as a cofactor.

It localises to the cytoplasm. It carries out the reaction (sulfur carrier)-H + L-cysteine = (sulfur carrier)-SH + L-alanine. Its pathway is cofactor biosynthesis; iron-sulfur cluster biosynthesis. Master enzyme that delivers sulfur to a number of partners involved in Fe-S cluster assembly, tRNA modification or cofactor biosynthesis. Catalyzes the removal of elemental sulfur atoms from cysteine to produce alanine. Functions as a sulfur delivery protein for Fe-S cluster synthesis onto IscU, an Fe-S scaffold assembly protein, as well as other S acceptor proteins. This Acinetobacter baumannii (strain SDF) protein is Cysteine desulfurase IscS.